The chain runs to 373 residues: UDP-N-acetylglucosamine--N-acetylmuramyl-(pentapeptide) pyrophosphoryl-undecaprenol N-acetylglucosamine transferase (373 aa).

UDP-N-acetyl-alpha-D-glucosamine is bound by residues 13–15 (TGG), Asn124, Arg165, Ser192, and Gln293.

It belongs to the glycosyltransferase 28 family. MurG subfamily.

The protein resides in the cell inner membrane. It carries out the reaction di-trans,octa-cis-undecaprenyl diphospho-N-acetyl-alpha-D-muramoyl-L-alanyl-D-glutamyl-meso-2,6-diaminopimeloyl-D-alanyl-D-alanine + UDP-N-acetyl-alpha-D-glucosamine = di-trans,octa-cis-undecaprenyl diphospho-[N-acetyl-alpha-D-glucosaminyl-(1-&gt;4)]-N-acetyl-alpha-D-muramoyl-L-alanyl-D-glutamyl-meso-2,6-diaminopimeloyl-D-alanyl-D-alanine + UDP + H(+). It functions in the pathway cell wall biogenesis; peptidoglycan biosynthesis. Cell wall formation. Catalyzes the transfer of a GlcNAc subunit on undecaprenyl-pyrophosphoryl-MurNAc-pentapeptide (lipid intermediate I) to form undecaprenyl-pyrophosphoryl-MurNAc-(pentapeptide)GlcNAc (lipid intermediate II). The sequence is that of UDP-N-acetylglucosamine--N-acetylmuramyl-(pentapeptide) pyrophosphoryl-undecaprenol N-acetylglucosamine transferase from Sinorhizobium fredii (strain NBRC 101917 / NGR234).